The following is a 194-amino-acid chain: Large ribosomal subunit protein bL9 (194 aa).

Positions 148–194 (QDEAERQARGENVINSQFEEDRAAEAEAAQDMAEGGAGSFEGDHYEA) are disordered.

This sequence belongs to the bacterial ribosomal protein bL9 family.

Functionally, binds to the 23S rRNA. This chain is Large ribosomal subunit protein bL9, found in Caulobacter vibrioides (strain ATCC 19089 / CIP 103742 / CB 15) (Caulobacter crescentus).